Reading from the N-terminus, the 160-residue chain is V-type proton ATPase subunit c (160 aa).

Residues 1 to 8 (MTELCPVY) lie on the Vacuolar side of the membrane. The chain crosses the membrane as a helical span at residues 9 to 31 (APFFGAIGCASAIIFTSLGAAYG). Topologically, residues 32–53 (TAKSGVGICATCVLRPDLLFKN) are cytoplasmic. A helical transmembrane segment spans residues 54-74 (IVPVIMAGIIAIYGLVVSVLV). At 75–90 (CYSLGQKQALYTGFIQ) the chain is on the vacuolar side. Residues 91–112 (LGAGLSVGLSGLAAGFAIGIVG) traverse the membrane as a helical segment. Residues 113–124 (DAGVRGSSQQPR) are Cytoplasmic-facing. Residues 125-150 (LFVGMILILIFAEVLGLYGLIVALLL) form a helical membrane-spanning segment. The Vacuolar segment spans residues 151–160 (NSRATQDVVC).

The protein belongs to the V-ATPase proteolipid subunit family. V-ATPase is a heteromultimeric enzyme composed of a peripheral catalytic V1 complex (components A to H) attached to an integral membrane V0 proton pore complex (components: a, c, c', c'', d, e, f and VOA1). The decameric c-ring forms the proton-conducting pore, and is composed of eight proteolipid subunits c, one subunit c' and one subunit c''.

Its subcellular location is the vacuole membrane. In terms of biological role, proton-conducting pore forming subunit of the V0 complex of vacuolar(H+)-ATPase (V-ATPase), a multisubunit enzyme composed of a peripheral complex (V1) that hydrolyzes ATP and a membrane integral complex (V0) that translocates protons. V-ATPase is responsible for acidifying and maintaining the pH of intracellular compartments. The sequence is that of V-type proton ATPase subunit c (VMA3) from Saccharomyces cerevisiae (strain ATCC 204508 / S288c) (Baker's yeast).